Reading from the N-terminus, the 139-residue chain is ATP synthase epsilon chain (139 aa).

This sequence belongs to the ATPase epsilon chain family. F-type ATPases have 2 components, CF(1) - the catalytic core - and CF(0) - the membrane proton channel. CF(1) has five subunits: alpha(3), beta(3), gamma(1), delta(1), epsilon(1). CF(0) has three main subunits: a, b and c.

Its subcellular location is the cell inner membrane. Functionally, produces ATP from ADP in the presence of a proton gradient across the membrane. In Pseudomonas entomophila (strain L48), this protein is ATP synthase epsilon chain.